We begin with the raw amino-acid sequence, 334 residues long: Holliday junction branch migration complex subunit RuvB (334 aa).

Positions 1–182 are large ATPase domain (RuvB-L); it reads MDERLVSSEL…FGVLSRLEYY (182 aa). ATP is bound by residues L21, R22, G63, K66, T67, T68, 129–131, R172, Y182, and R219; that span reads EDF. T67 serves as a coordination point for Mg(2+). The small ATPAse domain (RuvB-S) stretch occupies residues 183-253; that stretch reads TRDELSEIVI…VAVDALERLQ (71 aa). The interval 256–334 is head domain (RuvB-H); it reads KLGLDHIDRK…HFKMEVPNHD (79 aa). The DNA site is built by R311 and R316.

It belongs to the RuvB family. In terms of assembly, homohexamer. Forms an RuvA(8)-RuvB(12)-Holliday junction (HJ) complex. HJ DNA is sandwiched between 2 RuvA tetramers; dsDNA enters through RuvA and exits via RuvB. An RuvB hexamer assembles on each DNA strand where it exits the tetramer. Each RuvB hexamer is contacted by two RuvA subunits (via domain III) on 2 adjacent RuvB subunits; this complex drives branch migration. In the full resolvosome a probable DNA-RuvA(4)-RuvB(12)-RuvC(2) complex forms which resolves the HJ.

Its subcellular location is the cytoplasm. It catalyses the reaction ATP + H2O = ADP + phosphate + H(+). The RuvA-RuvB-RuvC complex processes Holliday junction (HJ) DNA during genetic recombination and DNA repair, while the RuvA-RuvB complex plays an important role in the rescue of blocked DNA replication forks via replication fork reversal (RFR). RuvA specifically binds to HJ cruciform DNA, conferring on it an open structure. The RuvB hexamer acts as an ATP-dependent pump, pulling dsDNA into and through the RuvAB complex. RuvB forms 2 homohexamers on either side of HJ DNA bound by 1 or 2 RuvA tetramers; 4 subunits per hexamer contact DNA at a time. Coordinated motions by a converter formed by DNA-disengaged RuvB subunits stimulates ATP hydrolysis and nucleotide exchange. Immobilization of the converter enables RuvB to convert the ATP-contained energy into a lever motion, pulling 2 nucleotides of DNA out of the RuvA tetramer per ATP hydrolyzed, thus driving DNA branch migration. The RuvB motors rotate together with the DNA substrate, which together with the progressing nucleotide cycle form the mechanistic basis for DNA recombination by continuous HJ branch migration. Branch migration allows RuvC to scan DNA until it finds its consensus sequence, where it cleaves and resolves cruciform DNA. The sequence is that of Holliday junction branch migration complex subunit RuvB from Bacillus licheniformis (strain ATCC 14580 / DSM 13 / JCM 2505 / CCUG 7422 / NBRC 12200 / NCIMB 9375 / NCTC 10341 / NRRL NRS-1264 / Gibson 46).